We begin with the raw amino-acid sequence, 419 residues long: MRLTPSLISCLSLLHFTSALVAFPGAEGFGANAVGGRQGEVYVVSNLNDSGEGSLRDAVSQPGRIVVFSVGGVIEITDRIVVSKQVTILGQTAPGDGITVYGNGWSFSNADDAIVRYIRIRMGKGGSSGKDAMGIADGKNMIFDHVSVSWGRDETFSINGDVSNVTIQNSIIAQGLETHSCGGLMQTDGGVSLFRNLYIDNKTRNPKVKGVNEFTNNVIYNWGGGGGYIAGGSDGESNVNVIGNYFISGPDTSVTAFTRGNENFHAYVETNYYDSDKDGTLNGSELGVDSTNYGGMDLVTEKYDYPAVASVLSPDDALTYVTKYAGASKVRDSVDTQLVAQVESYGKDGALISDEADMGGAGDLDQGTTPTDTDGDGIPDDAEAELGTDPNTADSMDLDTSGYTFLEVWANSLVPSSYA.

The first 19 residues, 1–19 (MRLTPSLISCLSLLHFTSA), serve as a signal peptide directing secretion. Residues asparagine 48, asparagine 164, and asparagine 201 are each glycosylated (N-linked (GlcNAc...) asparagine). Arginine 204 is a catalytic residue. One can recognise an EF-hand domain in the interval 261-296 (NENFHAYVETNYYDSDKDGTLNGSELGVDSTNYGGM). The Ca(2+) site is built by aspartate 274, aspartate 276, aspartate 278, and threonine 280. A glycan (N-linked (GlcNAc...) asparagine) is linked at asparagine 282. Residue glutamate 285 coordinates Ca(2+). Positions 350–395 (ALISDEADMGGAGDLDQGTTPTDTDGDGIPDDAEAELGTDPNTADS) are disordered. The segment covering 363–372 (DLDQGTTPTD) has biased composition (low complexity). The span at 373–386 (TDGDGIPDDAEAEL) shows a compositional bias: acidic residues.

The protein belongs to the polysaccharide lyase 1 family. It depends on Ca(2+) as a cofactor.

It localises to the secreted. It carries out the reaction Eliminative cleavage of (1-&gt;4)-alpha-D-galacturonan to give oligosaccharides with 4-deoxy-alpha-D-galact-4-enuronosyl groups at their non-reducing ends.. In terms of biological role, pectinolytic enzyme consist of four classes of enzymes: pectin lyase, polygalacturonase, pectin methylesterase and rhamnogalacturonase. Among pectinolytic enzymes, pectin lyase is the most important in depolymerization of pectin, since it cleaves internal glycosidic bonds of highly methylated pectins. Favors pectate, the anion, over pectin, the methyl ester. The polypeptide is Probable pectate lyase C (plyC) (Aspergillus flavus (strain ATCC 200026 / FGSC A1120 / IAM 13836 / NRRL 3357 / JCM 12722 / SRRC 167)).